Here is a 233-residue protein sequence, read N- to C-terminus: Antilisterial bacteriocin subtilosin biosynthesis protein AlbG (233 aa).

5 helical membrane passes run 4–24 (STVF…FGWV), 46–66 (GLLA…LHYV), 116–136 (TYVM…FEIV), 145–165 (TPPI…LFYM), and 192–212 (IGWM…LAAI).

It localises to the cell membrane. Functionally, involved in the production of the bacteriocin subtilosin. The protein is Antilisterial bacteriocin subtilosin biosynthesis protein AlbG (albG) of Bacillus subtilis.